A 447-amino-acid chain; its full sequence is Argininosuccinate synthase (447 aa).

ATP contacts are provided by residues 17–25 (AFSGGLDTS) and alanine 43. Tyrosine 99 provides a ligand contact to L-citrulline. The ATP site is built by glycine 129 and threonine 131. L-aspartate contacts are provided by threonine 131, asparagine 135, and aspartate 136. Asparagine 135 contacts L-citrulline. Position 136 (aspartate 136) interacts with ATP. L-citrulline-binding residues include arginine 139 and serine 192. Aspartate 194 is an ATP binding site. Residues threonine 201, glutamate 203, and glutamate 280 each contribute to the L-citrulline site.

It belongs to the argininosuccinate synthase family. Type 2 subfamily. Homotetramer.

It localises to the cytoplasm. It catalyses the reaction L-citrulline + L-aspartate + ATP = 2-(N(omega)-L-arginino)succinate + AMP + diphosphate + H(+). The protein operates within amino-acid biosynthesis; L-arginine biosynthesis; L-arginine from L-ornithine and carbamoyl phosphate: step 2/3. The polypeptide is Argininosuccinate synthase (Shigella flexneri serotype 5b (strain 8401)).